Here is a 503-residue protein sequence, read N- to C-terminus: Putative acyl--CoA ligase YdaB (503 aa).

Belongs to the ATP-dependent AMP-binding enzyme family.

This is Putative acyl--CoA ligase YdaB (ydaB) from Bacillus subtilis (strain 168).